A 185-amino-acid polypeptide reads, in one-letter code: Elongation factor P (185 aa).

It belongs to the elongation factor P family.

Its subcellular location is the cytoplasm. It participates in protein biosynthesis; polypeptide chain elongation. Functionally, involved in peptide bond synthesis. Stimulates efficient translation and peptide-bond synthesis on native or reconstituted 70S ribosomes in vitro. Probably functions indirectly by altering the affinity of the ribosome for aminoacyl-tRNA, thus increasing their reactivity as acceptors for peptidyl transferase. This Dictyoglomus turgidum (strain DSM 6724 / Z-1310) protein is Elongation factor P.